Here is a 526-residue protein sequence, read N- to C-terminus: MNNDFNSWDKYCNYLWFDKQVNIWLDISKINFTLDQISSLENKFKKVFSALKELEAGAISNIDEKRQVGHYWLRNPSVAPSNLIKDAINNEIRDISEFGEKILEGKITNNKNQKFTNVLWIGIGGSGLGPLLITEALQENSCGLNFSYIDNIDPFLISEKLDELSDKLATTLFVVVSKSGGTPEPKIAMNIIKKHVENKNLDWNSNAIAITMKDSQLYKKAQLENWLKIFNLPDWVGGRTSITSSVGLLPLALINRDVSEFIKGAAIMDDLTRIPNIKDNPAALLSSAWFFSGDGIGKRDMVVLPYRDRLQVFSKYLQQLVMESLGKKFNRKGEIVHQGISVFGNKGSTDQHAYVQQLRDGIDNFFCVFIELLDTPNSNFYFDSENPKEFLSGFLQGTRSALSNENRQSITITLDKLSCLTLGALIALFERAVSFYAELVDINAYDQPGVEAGKKAAAEIIDYQKQVTEIFNNGEELSIKEITSLLRNSSAEPIFFIIRQMCFGNDDYLINGDWSKPSTIRIKKIS.

Glu323 acts as the Proton donor in catalysis. Residues His352 and Lys454 contribute to the active site.

It belongs to the GPI family.

The protein resides in the cytoplasm. It carries out the reaction alpha-D-glucose 6-phosphate = beta-D-fructose 6-phosphate. Its pathway is carbohydrate biosynthesis; gluconeogenesis. It functions in the pathway carbohydrate degradation; glycolysis; D-glyceraldehyde 3-phosphate and glycerone phosphate from D-glucose: step 2/4. Its function is as follows. Catalyzes the reversible isomerization of glucose-6-phosphate to fructose-6-phosphate. The polypeptide is Glucose-6-phosphate isomerase (Prochlorococcus marinus subsp. pastoris (strain CCMP1986 / NIES-2087 / MED4)).